The chain runs to 453 residues: MSYQQPQLSGPLQRETDSSDRESLISGHEHGGKSSQSAAVFNVVNSVIGSGIIGLPYSMKQAGFPLGILLLFLVSYITDFSLVLLIKGGALSGTDSYQSLVNKTFGFPGYLLLSTLQFMYPFIAMISYNIITGDTLSKVFQRLPGVDPGGWFISRHFIIVVSTVTCTLPLSLYRDIAKLGKISFISTILTTVILGIVMTRAISLGPNIPKTDNAWVFAKPNAIQAIGVMSFAFICHHNCFLVYGSLEEPTVAKWRRIIHTSILVSVFICVLFATCGYFTFTGFTQGDLFENYCRSDDLVTFGRFCYGITVILTYPIECFVTREVIANVFFGGTLSSVFHTVLAVLIVTAATLVSLMIECLGIVLELNGVLCAAPLIFIIPSACYLKLSEEPRTHSDKIMACVMFPVGAVVMVVGFVMAITNPQDCTHGQEMFYCFPENVSFTNTSWSHLQLTT.

Residues 1–10 are compositionally biased toward polar residues; it reads MSYQQPQLSG. The segment at 1–34 is disordered; that stretch reads MSYQQPQLSGPLQRETDSSDRESLISGHEHGGKS. Positions 14–32 are enriched in basic and acidic residues; the sequence is RETDSSDRESLISGHEHGG. 11 consecutive transmembrane segments (helical) span residues 39–59, 66–86, 106–126, 150–170, 179–199, 222–242, 262–282, 299–319, 337–357, 359–379, and 398–418; these read AVFN…PYSM, LGIL…VLLI, GFPG…IAMI, GWFI…TLPL, LGKI…IVMT, AIQA…CFLV, ILVS…TFTG, VTFG…IECF, VFHT…SLMI, CLGI…IFII, and IMAC…FVMA. 2 N-linked (GlcNAc...) asparagine glycosylation sites follow: asparagine 438 and asparagine 443.

Belongs to the amino acid/polyamine transporter 2 family.

The protein resides in the membrane. Putative sodium-dependent amino acid/proton antiporter. This is Putative sodium-coupled neutral amino acid transporter 11 (Slc38a11) from Mus musculus (Mouse).